Here is a 624-residue protein sequence, read N- to C-terminus: MCGIVGYVGRRPAYVVVMDALRRMEYRGYDSSGIALVDGGTLTVRRRAGRLANLEEAVAEMPSTALSGTTGLGHTRWATHGRPTDRNAHPHRDAAGKIAVVHNGIIENFAVLRRELETAGVEFASDTDTEVAAHLVARAYRHGETADDFVGSVLAVLRRLEGHFTLVFANADDPGTLVAARRSTPLVLGIGDNEMFVGSDVAAFIEHTREAVELGQDQAVVITADGYRISDFDGNDGLQAGRDFRPFHIDWDLAAAEKGGYEYFMLKEIAEQPAAVADTLLGHFVGGRIVLDEQRLSDQELREIDKVFVVACGTAYHSGLLAKYAIEHWTRLPVEVELASEFRYRDPVLDRSTLVVAISQSGETADTLEAVRHAKEQKAKVLAICNTNGSQIPRECDAVLYTRAGPEIGVASTKTFLAQIAANYLLGLALAQARGTKYPDEVEREYHELEAMPDLVARVIAATGPVAELAHRFAQSSTVLFLGRHVGYPVALEGALKLKELAYMHAEGFAAGELKHGPIALIEDGLPVIVVMPSPKGSATLHAKLLSNIREIQTRGAVTIVIAEEGDETVRPYADHLIEIPAVSTLLQPLLSTIPLQVFAASVARARGYDVDKPRNLAKSVTVE.

Cys2 (nucleophile; for GATase activity) is an active-site residue. The Glutamine amidotransferase type-2 domain maps to 2-225 (CGIVGYVGRR…QDQAVVITAD (224 aa)). SIS domains lie at 297-436 (SDQE…ARGT) and 469-614 (LAHR…VDKP). Lys619 acts as the For Fru-6P isomerization activity in catalysis.

Homodimer.

Its subcellular location is the cytoplasm. It catalyses the reaction D-fructose 6-phosphate + L-glutamine = D-glucosamine 6-phosphate + L-glutamate. Its function is as follows. Catalyzes the first step in hexosamine metabolism, converting fructose-6P into glucosamine-6P using glutamine as a nitrogen source. This is Glutamine--fructose-6-phosphate aminotransferase [isomerizing] from Mycobacterium bovis (strain ATCC BAA-935 / AF2122/97).